The primary structure comprises 525 residues: GMP synthase [glutamine-hydrolyzing] (525 aa).

The Glutamine amidotransferase type-1 domain occupies arginine 9–leucine 207. Residue cysteine 86 is the Nucleophile of the active site. Residues histidine 181 and glutamate 183 contribute to the active site. Residues tryptophan 208–arginine 400 enclose the GMPS ATP-PPase domain. Position 235-241 (serine 235–serine 241) interacts with ATP.

In terms of assembly, homodimer.

The enzyme catalyses XMP + L-glutamine + ATP + H2O = GMP + L-glutamate + AMP + diphosphate + 2 H(+). It functions in the pathway purine metabolism; GMP biosynthesis; GMP from XMP (L-Gln route): step 1/1. Its function is as follows. Catalyzes the synthesis of GMP from XMP. The polypeptide is GMP synthase [glutamine-hydrolyzing] (Salmonella paratyphi B (strain ATCC BAA-1250 / SPB7)).